The following is a 107-amino-acid chain: U1-lycotoxin-Ls1p (107 aa).

The first 20 residues, 1–20 (MMKVLVVVALLVTLISYSSS), serve as a signal peptide directing secretion. The propeptide occupies 21–41 (EGIDDLEADELLSLMANEQTR). 4 cysteine pairs are disulfide-bonded: C44-C59, C51-C68, C58-C86, and C70-C84.

This sequence belongs to the neurotoxin 19 (CSTX) family. 04 (U1-Lctx) subfamily. In terms of tissue distribution, expressed by the venom gland.

It localises to the secreted. The protein is U1-lycotoxin-Ls1p of Lycosa singoriensis (Wolf spider).